We begin with the raw amino-acid sequence, 699 residues long: Endoplasmic reticulum mannosyl-oligosaccharide 1,2-alpha-mannosidase (699 aa).

Residues 1-84 are Cytoplasmic-facing; that stretch reads MAACEGRRSG…WKQLSRLQRN (84 aa). Residues 85–105 traverse the membrane as a helical; Signal-anchor for type II membrane protein segment; it reads MILFLLAFLLFCGLLFYINLA. Over 106-699 the chain is Lumenal; sequence DHWKALAFRL…AHPLPIWTPA (594 aa). A disordered region spans residues 125 to 243; it reads IAGLKPANPP…LPPARTQGTP (119 aa). Basic and acidic residues predominate over residues 176–201; that stretch reads DLKDGTQEEATKRQEAPVDPRPEGDP. E330 (proton donor) is an active-site residue. D463 is a catalytic residue. C527 and C556 are disulfide-bonded. Catalysis depends on E570, which acts as the Proton donor. E599 is a catalytic residue. T688 contributes to the Ca(2+) binding site.

This sequence belongs to the glycosyl hydrolase 47 family. Ca(2+) is required as a cofactor. In terms of tissue distribution, widely expressed.

It is found in the endoplasmic reticulum membrane. The enzyme catalyses N(4)-(alpha-D-Man-(1-&gt;2)-alpha-D-Man-(1-&gt;2)-alpha-D-Man-(1-&gt;3)-[alpha-D-Man-(1-&gt;2)-alpha-D-Man-(1-&gt;3)-[alpha-D-Man-(1-&gt;2)-alpha-D-Man-(1-&gt;6)]-alpha-D-Man-(1-&gt;6)]-beta-D-Man-(1-&gt;4)-beta-D-GlcNAc-(1-&gt;4)-beta-D-GlcNAc)-L-asparaginyl-[protein] (N-glucan mannose isomer 9A1,2,3B1,2,3) + 4 H2O = N(4)-(alpha-D-Man-(1-&gt;3)-[alpha-D-Man-(1-&gt;3)-[alpha-D-Man-(1-&gt;6)]-alpha-D-Man-(1-&gt;6)]-beta-D-Man-(1-&gt;4)-beta-D-GlcNAc-(1-&gt;4)-beta-D-GlcNAc)-L-asparaginyl-[protein] (N-glucan mannose isomer 5A1,2) + 4 beta-D-mannose. It catalyses the reaction N(4)-(alpha-D-Man-(1-&gt;2)-alpha-D-Man-(1-&gt;2)-alpha-D-Man-(1-&gt;3)-[alpha-D-Man-(1-&gt;3)-[alpha-D-Man-(1-&gt;2)-alpha-D-Man-(1-&gt;6)]-alpha-D-Man-(1-&gt;6)]-beta-D-Man-(1-&gt;4)-beta-D-GlcNAc-(1-&gt;4)-beta-D-GlcNAc)-L-asparaginyl-[protein] (N-glucan mannose isomer 8A1,2,3B1,3) + 3 H2O = N(4)-(alpha-D-Man-(1-&gt;3)-[alpha-D-Man-(1-&gt;3)-[alpha-D-Man-(1-&gt;6)]-alpha-D-Man-(1-&gt;6)]-beta-D-Man-(1-&gt;4)-beta-D-GlcNAc-(1-&gt;4)-beta-D-GlcNAc)-L-asparaginyl-[protein] (N-glucan mannose isomer 5A1,2) + 3 beta-D-mannose. Its pathway is protein modification; protein glycosylation. Inhibited by both 1-deoxymannojirimycin (dMNJ) and kifunensine. Its function is as follows. Involved in glycoprotein quality control targeting of misfolded glycoproteins for degradation. It primarily trims a single alpha-1,2-linked mannose residue from Man(9)GlcNAc(2) to produce Man(8)GlcNAc(2), but at high enzyme concentrations, as found in the ER quality control compartment (ERQC), it further trims the carbohydrates to Man(5-6)GlcNAc(2). This is Endoplasmic reticulum mannosyl-oligosaccharide 1,2-alpha-mannosidase (MAN1B1) from Homo sapiens (Human).